Reading from the N-terminus, the 314-residue chain is MRFKGLDLNLLVALDALMTERNLTAAARKIHLSQPAMSAAVARLRTYFGDELFTMRGRELVPTPRAEGLAAPIREALLHIQLSIISRDAFDPAESSRRFRIILSDFMTIVFFRRIIDRVAREAPAVRFELLPFSDEHDELLRRGEVDFLVFPELFMSSAHPKATLFEETLVCVGCRTNKQLSRQLTVEKYMSMGHVAAKFGRALRPNIEEWFLLEHGLKRRIEVVVQGFGMIPPVLVDTVRIGTMPLRLAKHFEKQMLLKIVEPPLPLPSFTEAVQWPAAKNTDPASIWMRRIILQEAANMASAHEAARHRRHC.

An HTH lysR-type domain is found at 6–63 (LDLNLLVALDALMTERNLTAAARKIHLSQPAMSAAVARLRTYFGDELFTMRGRELVPT). The segment at residues 23-42 (LTAAARKIHLSQPAMSAAVA) is a DNA-binding region (H-T-H motif).

This sequence belongs to the LysR transcriptional regulatory family.

NodD regulates the expression of the nodABCFE genes which encode other nodulation proteins. NodD is also a negative regulator of its own expression. Binds flavonoids as inducers. The chain is Nodulation protein D 1 (nodD1) from Bradyrhizobium sp. (strain NC92).